The chain runs to 228 residues: Max-interacting protein 1 (228 aa).

Disordered stretches follow at residues 29-76 and 162-228; these read GYAS…NELE and GSTI…SFTS. Residues 43–56 are compositionally biased toward basic residues; that stretch reads QHSKPPRRLSRAQK. The segment covering 57–70 has biased composition (polar residues); sequence HSSGSSNTSTANRS. The bHLH domain maps to 67–119; that stretch reads ANRSTHNELEKNRRAHLRLCLERLKVLIPLGPDCTRHTTLGLLNKAKAHIKKL. Residues 173–183 are compositionally biased toward acidic residues; the sequence is EREEIEVDVES. Over residues 216–228 the composition is skewed to polar residues; sequence GYSSASVKLSFTS.

In terms of assembly, efficient DNA binding requires dimerization with another bHLH protein. Binds DNA as a heterodimer with MAX. Interacts with SMC3. Interacts with RNF17.

Its subcellular location is the nucleus. Functionally, transcriptional repressor. MXI1 binds with MAX to form a sequence-specific DNA-binding protein complex which recognizes the core sequence 5'-CAC[GA]TG-3'. MXI1 thus antagonizes MYC transcriptional activity by competing for MAX. The sequence is that of Max-interacting protein 1 (Mxi1) from Rattus norvegicus (Rat).